The chain runs to 145 residues: 3-dehydroquinate dehydratase (145 aa).

The active-site Proton acceptor is the Tyr22. Substrate-binding residues include Asn71, His77, and Asp84. His97 (proton donor) is an active-site residue. Substrate-binding positions include 98 to 99 (LS) and Arg108.

This sequence belongs to the type-II 3-dehydroquinase family. As to quaternary structure, homododecamer.

It catalyses the reaction 3-dehydroquinate = 3-dehydroshikimate + H2O. The protein operates within metabolic intermediate biosynthesis; chorismate biosynthesis; chorismate from D-erythrose 4-phosphate and phosphoenolpyruvate: step 3/7. Catalyzes a trans-dehydration via an enolate intermediate. This Francisella tularensis subsp. tularensis (strain WY96-3418) protein is 3-dehydroquinate dehydratase.